The primary structure comprises 1365 residues: MGTSSHGLATNSSGAKVAERDGFQDVPAPGEGAAGRICGAQPVPFVPQVLGVMIGAGVAVVVTAVLILLVVRRLRVPKTPAPDGPRYRFRKRDKVLFYGRKIMRKVSQSTSSLVDTSVSATSRPRMKKKLKMLNIAKKILRIQKETPTLQRKEPPPAVLEADLTEGDLANSHLPSEVLYMFKNVRVLGHFEKPLFLELCRHMVFQRLGQGDYVFRPGQPDASIYVVQDGLLELCLPGPDGKECVVKEVVPGDSVNSLLSILDVITGHQHPQRTVSARAARDSTVLRLPVEAFSAVFAKYPESLVRVVQIIMVRLQRVTFLALHNYLGLTNELFSHEIQPLRLFPSPGLPTRTSPVRGSKRMVSTSATDEPRETPGRPPDPTGAPLPGPTGDPVKPTSLETPSAPLLSRCVSMPGDISGLQGGPRSDFDMAYERGRISVSLQEGASGGSLAAPARTPTQEPREQPAGACEYSYCEDESATGGCPFGPYQGRQTSSIFEAAKRELAKLMRIEDPSLLNSRVLLHHAKAGTIIARQGDQDVSLHFVLWGCLHVYQHMIDKAEDVCLFVAQPGELVGQLAVLTGEPLIFTLRAQRDCTFLRISKSDFYEIMRAQPSVVLSAAHTVAARMSPFVRQMDFAIDWTAVEAGRALYRQGDRSDCTYIVLNGRLRSVIQRGSGKKELVGEYGRGDLIGVVEALTRQPRATTVHAVRDTELAKLPEGTLGHIKRRHPQVVTRLIHLLSQKILGNLQQLQGPFPGSGLGVPPHSELTNPASNLATVAVLPVCAEVPMVAFTLELQHALQAIGPTLLLNSDIIRARLGASALDSIQEFRLSGWLAQQEDAHRIVLYQTDASLTPWTVRCLRQADCILIVGLGDQEPTLGQLEQMLENTAVRALKQLVLLHREEGAGPTRTVEWLNMRSWCSGHPHLRCPRRLFSRRSPAKLHELYEKVFSRRADRHSDFSRLARVLTGNTIALVLGGGGARGCSHIGVLKALEEAGVPVDLVGGTSIGSFIGALYAEERSASRTKQRAREWAKSMTSVLEPVLDLTYPVTSMFTGSAFNRSIHRVFQDKQIEDLWLPYFNVTTDITASAMRVHKDGSLWRYVRASMTLSGYLPPLCDPKDGHLLMDGGYINNLPADIARSMGAKTVIAIDVGSQDETDLSTYGDSLSGWWLLWKRLNPWADKVKVPDMAEIQSRLAYVSCVRQLEVVKSSSYCEYLRPPIDCFKTMDFGKFDQVYDVGYQYGKAVFGGWSRGNVIEKMLTDRRSTDLNESRRADVLAYPSSGFTDLAEIVSRIEPPTSYVSDGCADGEESDCLTEYEEDAGPDCSRDEGGSPEGASPSTASEMEEEKSILRQRRCLPQEPPGSATDA.

Residues 1–50 (MGTSSHGLATNSSGAKVAERDGFQDVPAPGEGAAGRICGAQPVPFVPQVL) lie on the Lumenal side of the membrane. Asparagine 11 carries N-linked (GlcNAc...) asparagine glycosylation. A helical membrane pass occupies residues 51–71 (GVMIGAGVAVVVTAVLILLVV). Residues 72–1365 (RRLRVPKTPA…QEPPGSATDA (1294 aa)) lie on the Cytoplasmic side of the membrane. 186–313 (VLGHFEKPLF…VRVVQIIMVR (128 aa)) contacts a nucleoside 3',5'-cyclic phosphate. Disordered stretches follow at residues 343–427 (FPSP…RSDF) and 441–463 (QEGASGGSLAAPARTPTQEPREQ). Phosphoserine is present on serine 345. The segment covering 350–367 (TRTSPVRGSKRMVSTSAT) has biased composition (polar residues). Threonine 352 carries the post-translational modification Phosphothreonine. Phosphoserine is present on residues serine 353 and serine 363. Pro residues predominate over residues 375–389 (GRPPDPTGAPLPGPT). Position 411 is a phosphoserine (serine 411). Position 455 is a phosphothreonine (threonine 455). A nucleoside 3',5'-cyclic phosphate is bound by residues 502–624 (ELAK…VAAR) and 620–740 (TVAA…LSQK). Residues 971–1137 (LVLGGGGARG…INNLPADIAR (167 aa)) enclose the PNPLA domain. The GXGXXG signature appears at 975–980 (GGGARG). Residues 1002–1006 (GTSIG) carry the GXSXG motif. Serine 1004 acts as the Nucleophile in catalysis. The active-site Proton acceptor is aspartate 1124. The short motif at 1124 to 1126 (DGG) is the DGA/G element. Residues 1296 to 1365 (SYVSDGCADG…QEPPGSATDA (70 aa)) form a disordered region. Positions 1303 to 1319 (ADGEESDCLTEYEEDAG) are enriched in acidic residues.

The protein belongs to the NTE family. Glycosylated.

The protein resides in the endoplasmic reticulum membrane. The enzyme catalyses a 1-acyl-sn-glycero-3-phosphocholine + H2O = sn-glycerol 3-phosphocholine + a fatty acid + H(+). It catalyses the reaction 1-hexadecanoyl-sn-glycero-3-phosphocholine + H2O = sn-glycerol 3-phosphocholine + hexadecanoate + H(+). It carries out the reaction 1-(9Z-octadecenoyl)-sn-glycero-3-phosphocholine + H2O = sn-glycerol 3-phosphocholine + (9Z)-octadecenoate + H(+). The catalysed reaction is 1-hexadecanoylglycerol + H2O = glycerol + hexadecanoate + H(+). The enzyme catalyses 2-hexadecanoylglycerol + H2O = glycerol + hexadecanoate + H(+). It catalyses the reaction 1-(9Z-octadecenoyl)-glycerol + H2O = glycerol + (9Z)-octadecenoate + H(+). It carries out the reaction 2-(9Z-octadecenoyl)-glycerol + H2O = glycerol + (9Z)-octadecenoate + H(+). The catalysed reaction is 2-(5Z,8Z,11Z,14Z-eicosatetraenoyl)-glycerol + H2O = glycerol + (5Z,8Z,11Z,14Z)-eicosatetraenoate + H(+). The enzyme catalyses 1-hexadecanoyl-sn-glycero-3-phosphate + H2O = sn-glycerol 3-phosphate + hexadecanoate + H(+). Its activity is regulated as follows. Inhibited by a series a OPs such as mipafox (MPX), phenyl saligenin phosphate (PSP), phenyl dipentyl phosphinate (PDPP), diisopropyl fluorophosphate and paraoxon. In terms of biological role, phospholipase B that deacylates intracellular phosphatidylcholine (PtdCho), generating glycerophosphocholine (GroPtdCho). This deacylation occurs at both sn-2 and sn-1 positions of PtdCho. Catalyzes the hydrolysis of several naturally occurring membrane-associated lipids. Hydrolyzes lysophospholipids and monoacylglycerols, preferring the 1-acyl to the 2-acyl isomer. Does not catalyze hydrolysis of di- or triacylglycerols or fatty acid amides. This Pongo abelii (Sumatran orangutan) protein is Patatin-like phospholipase domain-containing protein 6 (PNPLA6).